A 417-amino-acid polypeptide reads, in one-letter code: Equilibrative nucleotide transporter 2 (417 aa).

11 consecutive transmembrane segments (helical) span residues 20 to 40 (AVCW…LTIV), 52 to 72 (PSRI…SVLV), 85 to 105 (LFGY…NLAT), 109 to 129 (GGIG…LADA), 144 to 164 (PEFL…TSGL), 185 to 205 (LFFA…AYVF), 265 to 285 (LAVT…GFLS), 292 to 312 (SLGD…DLVG), 328 to 348 (CLLI…ITGI), 354 to 374 (WMIF…VCVI), and 393 to 413 (LVLY…LWLV).

Belongs to the SLC29A/ENT transporter (TC 2.A.57) family. As to expression, expressed in leaves and flowers.

Its subcellular location is the cell membrane. May be involved in nucleoside transport. This is Equilibrative nucleotide transporter 2 (ENT2) from Arabidopsis thaliana (Mouse-ear cress).